Reading from the N-terminus, the 557-residue chain is Glucose-6-phosphate isomerase (557 aa).

Glutamate 361 serves as the catalytic Proton donor. Residues histidine 392 and lysine 520 contribute to the active site.

The protein belongs to the GPI family.

The protein resides in the cytoplasm. It catalyses the reaction alpha-D-glucose 6-phosphate = beta-D-fructose 6-phosphate. It functions in the pathway carbohydrate biosynthesis; gluconeogenesis. Its pathway is carbohydrate degradation; glycolysis; D-glyceraldehyde 3-phosphate and glycerone phosphate from D-glucose: step 2/4. In terms of biological role, catalyzes the reversible isomerization of glucose-6-phosphate to fructose-6-phosphate. The sequence is that of Glucose-6-phosphate isomerase from Acinetobacter baylyi (strain ATCC 33305 / BD413 / ADP1).